The primary structure comprises 154 residues: Myoglobin (154 aa).

The region spanning 2 to 148 is the Globin domain; it reads VLSDGEWQLV…FRKDIAAKYK (147 aa). Serine 4 is subject to Phosphoserine. Histidine 65 contributes to the nitrite binding site. Histidine 65 lines the O2 pocket. Threonine 68 carries the phosphothreonine modification. Residue histidine 94 participates in heme b binding.

This sequence belongs to the globin family. Monomeric.

Its subcellular location is the cytoplasm. It is found in the sarcoplasm. It catalyses the reaction Fe(III)-heme b-[protein] + nitric oxide + H2O = Fe(II)-heme b-[protein] + nitrite + 2 H(+). It carries out the reaction H2O2 + AH2 = A + 2 H2O. Monomeric heme protein which primary function is to store oxygen and facilitate its diffusion within muscle tissues. Reversibly binds oxygen through a pentacoordinated heme iron and enables its timely and efficient release as needed during periods of heightened demand. Depending on the oxidative conditions of tissues and cells, and in addition to its ability to bind oxygen, it also has a nitrite reductase activity whereby it regulates the production of bioactive nitric oxide. Under stress conditions, like hypoxia and anoxia, it also protects cells against reactive oxygen species thanks to its pseudoperoxidase activity. This chain is Myoglobin, found in Balaena mysticetus (Bowhead whale).